Consider the following 138-residue polypeptide: Nucleoside diphosphate kinase (138 aa).

Residues Lys9, Phe57, Arg85, Thr91, Arg102, and Asn112 each contribute to the ATP site. Catalysis depends on His115, which acts as the Pros-phosphohistidine intermediate.

This sequence belongs to the NDK family. As to quaternary structure, homotetramer. Mg(2+) is required as a cofactor.

It localises to the cytoplasm. It catalyses the reaction a 2'-deoxyribonucleoside 5'-diphosphate + ATP = a 2'-deoxyribonucleoside 5'-triphosphate + ADP. It carries out the reaction a ribonucleoside 5'-diphosphate + ATP = a ribonucleoside 5'-triphosphate + ADP. Functionally, major role in the synthesis of nucleoside triphosphates other than ATP. The ATP gamma phosphate is transferred to the NDP beta phosphate via a ping-pong mechanism, using a phosphorylated active-site intermediate. This is Nucleoside diphosphate kinase from Lawsonia intracellularis (strain PHE/MN1-00).